The sequence spans 228 residues: MIRLGGWCARRLCSAAVPAGRRGAAGGLGLAGGRALRVLVDMDGVLADFEGGFLRKFRARFPDQPFIALEDRRGFWVSEQYGRLRPGLSEKAISIWESKNFFFELEPLPGAVEAVKEMASLQNTDVFICTSPIKMFKYCPYEKYAWVEKYFGPDFLEQIVLTRDKTVVSADLLIDDRPDITGAEPTPSWEHVLFTACHNQHLQLQPPRRRLHSWADDWKAILDSKRPC.

Residues 1–31 (MIRLGGWCARRLCSAAVPAGRRGAAGGLGLA) constitute a mitochondrion transit peptide. Catalysis depends on D41, which acts as the Nucleophile. Positions 41 and 43 each coordinate Mg(2+). D43 serves as the catalytic Proton donor. D43, F49, F75, W76, V77, W96, T130, and K165 together coordinate substrate. Mg(2+) is bound at residue D176.

Belongs to the 5'(3')-deoxyribonucleotidase family. As to quaternary structure, homodimer. Mg(2+) serves as cofactor. In terms of tissue distribution, highly expressed in heart, brain and skeletal muscle. Detected at very low levels in kidney and pancreas.

It localises to the mitochondrion. In terms of biological role, dephosphorylates specifically the 5' and 2'(3')-phosphates of uracil and thymine deoxyribonucleotides, and so protects mitochondrial DNA replication from excess dTTP. Has only marginal activity towards dIMP and dGMP. The chain is 5'(3')-deoxyribonucleotidase, mitochondrial (NT5M) from Homo sapiens (Human).